A 100-amino-acid polypeptide reads, in one-letter code: Large ribosomal subunit protein bL21 (100 aa).

The protein belongs to the bacterial ribosomal protein bL21 family. In terms of assembly, part of the 50S ribosomal subunit. Contacts protein L20.

This protein binds to 23S rRNA in the presence of protein L20. In Corynebacterium jeikeium (strain K411), this protein is Large ribosomal subunit protein bL21.